The following is an 89-amino-acid chain: Small ribosomal subunit protein uS15 (89 aa).

This sequence belongs to the universal ribosomal protein uS15 family. As to quaternary structure, part of the 30S ribosomal subunit. Forms a bridge to the 50S subunit in the 70S ribosome, contacting the 23S rRNA.

Its function is as follows. One of the primary rRNA binding proteins, it binds directly to 16S rRNA where it helps nucleate assembly of the platform of the 30S subunit by binding and bridging several RNA helices of the 16S rRNA. In terms of biological role, forms an intersubunit bridge (bridge B4) with the 23S rRNA of the 50S subunit in the ribosome. This Dictyoglomus thermophilum (strain ATCC 35947 / DSM 3960 / H-6-12) protein is Small ribosomal subunit protein uS15.